A 179-amino-acid polypeptide reads, in one-letter code: Large ribosomal subunit protein uL6 (179 aa).

It belongs to the universal ribosomal protein uL6 family. Part of the 50S ribosomal subunit.

Its function is as follows. This protein binds to the 23S rRNA, and is important in its secondary structure. It is located near the subunit interface in the base of the L7/L12 stalk, and near the tRNA binding site of the peptidyltransferase center. This is Large ribosomal subunit protein uL6 from Buchnera aphidicola subsp. Baizongia pistaciae (strain Bp).